The sequence spans 151 residues: Probable cGMP 3',5'-cyclic phosphodiesterase subunit delta (151 aa).

This sequence belongs to the PDE6D/unc-119 family. In terms of assembly, interacts with Pde6.

Its subcellular location is the nucleus. The protein resides in the cytoplasm. This chain is Probable cGMP 3',5'-cyclic phosphodiesterase subunit delta, found in Drosophila persimilis (Fruit fly).